Consider the following 126-residue polypeptide: Small ribosomal subunit protein uS13c (126 aa).

Residues 100-126 (GQRTRTNARTRRGARQTVAGKKKAPSK) are disordered. Residues 101–126 (QRTRTNARTRRGARQTVAGKKKAPSK) show a composition bias toward basic residues.

The protein belongs to the universal ribosomal protein uS13 family. As to quaternary structure, part of the 30S ribosomal subunit.

The protein localises to the plastid. The protein resides in the cyanelle. Located at the top of the head of the 30S subunit, it contacts several helices of the 16S rRNA. In Cyanophora paradoxa, this protein is Small ribosomal subunit protein uS13c.